A 561-amino-acid chain; its full sequence is Endoplasmic reticulum oxidoreductin-1 (561 aa).

The N-terminal stretch at 1–18 (MVKVLQLCFLSAISLVQA) is a signal peptide. N-linked (GlcNAc...) asparagine glycosylation is found at Asn-20 and Asn-39. 5 cysteine pairs are disulfide-bonded: Cys-95/Cys-349, Cys-105/Cys-110, Cys-145/Cys-166, Cys-152/Cys-295, and Cys-352/Cys-355. Residue Asn-135 is glycosylated (N-linked (GlcNAc...) asparagine). FAD-binding residues include Arg-187, Thr-189, Trp-200, Ser-228, His-231, and Arg-260. N-linked (GlcNAc...) asparagine glycosylation occurs at Asn-342. The Nucleophile role is filled by Cys-352. The active site involves Cys-355. An N-linked (GlcNAc...) asparagine glycan is attached at Asn-452.

The protein belongs to the EROs family. As to quaternary structure, may function both as a monomer and a homodimer. FAD is required as a cofactor.

It localises to the endoplasmic reticulum membrane. Its function is as follows. Essential oxidoreductase that oxidizes proteins in the endoplasmic reticulum to produce disulfide bonds. Acts by oxidizing directly PDI1 isomerase through a direct disulfide exchange. Does not act as a direct oxidant of folding substrate, but relies on PDI1 to transfer oxidizing equivalent. Does not oxidize all pdi related proteins, suggesting that it can discriminate between PDI1 and related proteins. Its reoxidation probably involves electron transfer to molecular oxygen via FAD. Acts independently of glutathione. May be responsible for a significant proportion of reactive oxygen species (ROS) in the cell, thereby being a source of oxidative stress. The sequence is that of Endoplasmic reticulum oxidoreductin-1 (ERO1) from Kluyveromyces lactis (strain ATCC 8585 / CBS 2359 / DSM 70799 / NBRC 1267 / NRRL Y-1140 / WM37) (Yeast).